The following is a 120-amino-acid chain: NAD(P)H-quinone oxidoreductase subunit 3, chloroplastic (120 aa).

The next 3 helical transmembrane spans lie at 9–29, 64–84, and 88–108; these read IFWA…IISG, MFAL…PWAV, and VLGV…VVGS.

The protein belongs to the complex I subunit 3 family. NDH is composed of at least 16 different subunits, 5 of which are encoded in the nucleus.

Its subcellular location is the plastid. It localises to the chloroplast thylakoid membrane. The catalysed reaction is a plastoquinone + NADH + (n+1) H(+)(in) = a plastoquinol + NAD(+) + n H(+)(out). The enzyme catalyses a plastoquinone + NADPH + (n+1) H(+)(in) = a plastoquinol + NADP(+) + n H(+)(out). Functionally, NDH shuttles electrons from NAD(P)H:plastoquinone, via FMN and iron-sulfur (Fe-S) centers, to quinones in the photosynthetic chain and possibly in a chloroplast respiratory chain. The immediate electron acceptor for the enzyme in this species is believed to be plastoquinone. Couples the redox reaction to proton translocation, and thus conserves the redox energy in a proton gradient. This chain is NAD(P)H-quinone oxidoreductase subunit 3, chloroplastic, found in Nuphar advena (Common spatterdock).